Consider the following 412-residue polypeptide: Light-independent protochlorophyllide reductase subunit N (412 aa).

Residues Cys17, Cys42, and Cys103 each contribute to the [4Fe-4S] cluster site.

The protein belongs to the BchN/ChlN family. Protochlorophyllide reductase is composed of three subunits; ChlL, ChlN and ChlB. Forms a heterotetramer of two ChlB and two ChlN subunits. [4Fe-4S] cluster is required as a cofactor.

The enzyme catalyses chlorophyllide a + oxidized 2[4Fe-4S]-[ferredoxin] + 2 ADP + 2 phosphate = protochlorophyllide a + reduced 2[4Fe-4S]-[ferredoxin] + 2 ATP + 2 H2O. It participates in porphyrin-containing compound metabolism; chlorophyll biosynthesis (light-independent). Component of the dark-operative protochlorophyllide reductase (DPOR) that uses Mg-ATP and reduced ferredoxin to reduce ring D of protochlorophyllide (Pchlide) to form chlorophyllide a (Chlide). This reaction is light-independent. The NB-protein (ChlN-ChlB) is the catalytic component of the complex. This is Light-independent protochlorophyllide reductase subunit N from Synechococcus sp. (strain CC9902).